The chain runs to 492 residues: GlcNAc-binding protein A (492 aa).

The first 23 residues, 1–23 (MNKSSTKTLIALSMMAVSSGVSA), serve as a signal peptide directing secretion. One can recognise a Chitin-binding type-4 domain in the interval 24–204 (HGYVSETNDG…AFYNVIDVKF (181 aa)). The region spanning 443-484 (AGTKVLAEDGNVYQCKEFPYSGYCVQWTETATNFAPGVGSDW) is the Chitin-binding type-3 domain.

Belongs to the GbpA family.

The protein resides in the secreted. In terms of biological role, probably interacts with GlcNAc residues. May promote attachment to both epithelial cell surfaces and chitin. The sequence is that of GlcNAc-binding protein A from Aliivibrio fischeri (strain ATCC 700601 / ES114) (Vibrio fischeri).